Here is a 532-residue protein sequence, read N- to C-terminus: UDP-glucuronosyltransferase 1A4 (532 aa).

The first 27 residues, 1-27, serve as a signal peptide directing secretion; it reads MVLGVWITLWRLVRLLLLLCVLPWAEG. N-linked (GlcNAc...) asparagine glycans are attached at residues asparagine 141 and asparagine 295. Residues 490–506 traverse the membrane as a helical segment; sequence VIGFLLAIVLTVAFVTF.

Belongs to the UDP-glycosyltransferase family. As to quaternary structure, homodimers. Homooligomer. Interacts with UGT1A1, UGT1A3, UGT1A6, UGT1A7, UGT1A8, UGT1A9 and UGT1A10 to form heterodimers.

It is found in the endoplasmic reticulum membrane. The catalysed reaction is glucuronate acceptor + UDP-alpha-D-glucuronate = acceptor beta-D-glucuronoside + UDP + H(+). It catalyses the reaction calcidiol + UDP-alpha-D-glucuronate = calcidiol 25-O-(beta-D-glucuronide) + UDP + H(+). The enzyme catalyses calcidiol + UDP-alpha-D-glucuronate = calcidiol 3-O-(beta-D-glucuronide) + UDP + H(+). It carries out the reaction calcitriol + UDP-alpha-D-glucuronate = calcitriol 25-O-(beta-D-glucuronide) + UDP + H(+). The catalysed reaction is (5Z,8Z,11Z,14Z)-eicosatetraenoate + UDP-alpha-D-glucuronate = O-[(5Z),(8Z),(11Z),(14Z)-eicosatetraenoyl]-beta-D-glucuronate + UDP. It catalyses the reaction 15-hydroxy-(5Z,8Z,11Z,13E)-eicosatetraenoate + UDP-alpha-D-glucuronate = 15-O-(beta-D-glucuronosyl)-(5Z,8Z,11Z,14Z)-eicosatetraenoate + UDP + H(+). The enzyme catalyses 20-hydroxy-(5Z,8Z,11Z,14Z)-eicosatetraenoate + UDP-alpha-D-glucuronate = 20-O-(beta-D-glucuronosyl)-(5Z,8Z,11Z,14Z)-eicosatetraenoate + UDP + H(+). Its function is as follows. UDP-glucuronosyltransferase (UGT) that catalyzes phase II biotransformation reactions in which lipophilic substrates are conjugated with glucuronic acid to increase the metabolite's water solubility, thereby facilitating excretion into either the urine or bile. Essential for the elimination and detoxification of drugs, xenobiotics and endogenous compounds. Involved in the glucuronidation of calcidiol, which is the major circulating form of vitamin D3 essential for the regulation of calcium and phosphate homeostasis. Also glucuronidates the biologically active form of vitamin D3, calcitriol, probably leading to its biliary transport and intestinal reabsorption. Involved in the glucuronidation of arachidonic acid (AA) and AA-derived eicosanoids including 15-HETE, 20-HETE and PGB1. This chain is UDP-glucuronosyltransferase 1A4 (Ugt1a4), found in Oryctolagus cuniculus (Rabbit).